The chain runs to 229 residues: Ribonuclease 3 (229 aa).

In terms of domain architecture, RNase III spans 5–127 (LDRLERKLGY…LIGAIYLDTG (123 aa)). A Mg(2+)-binding site is contributed by Glu-40. Residue Asp-44 is part of the active site. Mg(2+)-binding residues include Asp-113 and Glu-116. Residue Glu-116 is part of the active site. The 71-residue stretch at 154-224 (DPKTRLQEFL…AAAALVALGV (71 aa)) folds into the DRBM domain.

Belongs to the ribonuclease III family. Homodimer. It depends on Mg(2+) as a cofactor.

It is found in the cytoplasm. The enzyme catalyses Endonucleolytic cleavage to 5'-phosphomonoester.. In terms of biological role, digests double-stranded RNA. Involved in the processing of primary rRNA transcript to yield the immediate precursors to the large and small rRNAs (23S and 16S). Processes some mRNAs, and tRNAs when they are encoded in the rRNA operon. Processes pre-crRNA and tracrRNA of type II CRISPR loci if present in the organism. The protein is Ribonuclease 3 of Pseudomonas aeruginosa (strain LESB58).